The following is a 264-amino-acid chain: Thymidylate synthase (264 aa).

Residues arginine 21 and 126–127 (RR) contribute to the dUMP site. Cysteine 146 acts as the Nucleophile in catalysis. Residues 166–169 (RSAD), asparagine 177, and 207–209 (HLY) contribute to the dUMP site. Aspartate 169 contributes to the (6R)-5,10-methylene-5,6,7,8-tetrahydrofolate binding site. Alanine 263 provides a ligand contact to (6R)-5,10-methylene-5,6,7,8-tetrahydrofolate.

The protein belongs to the thymidylate synthase family. Bacterial-type ThyA subfamily. In terms of assembly, homodimer.

Its subcellular location is the cytoplasm. It carries out the reaction dUMP + (6R)-5,10-methylene-5,6,7,8-tetrahydrofolate = 7,8-dihydrofolate + dTMP. It participates in pyrimidine metabolism; dTTP biosynthesis. In terms of biological role, catalyzes the reductive methylation of 2'-deoxyuridine-5'-monophosphate (dUMP) to 2'-deoxythymidine-5'-monophosphate (dTMP) while utilizing 5,10-methylenetetrahydrofolate (mTHF) as the methyl donor and reductant in the reaction, yielding dihydrofolate (DHF) as a by-product. This enzymatic reaction provides an intracellular de novo source of dTMP, an essential precursor for DNA biosynthesis. The sequence is that of Thymidylate synthase from Rhodopseudomonas palustris (strain HaA2).